The following is a 383-amino-acid chain: Anhydro-N-acetylmuramic acid kinase (383 aa).

9-16 (GTSLDGID) contributes to the ATP binding site.

Belongs to the anhydro-N-acetylmuramic acid kinase family.

It catalyses the reaction 1,6-anhydro-N-acetyl-beta-muramate + ATP + H2O = N-acetyl-D-muramate 6-phosphate + ADP + H(+). The protein operates within amino-sugar metabolism; 1,6-anhydro-N-acetylmuramate degradation. It participates in cell wall biogenesis; peptidoglycan recycling. Catalyzes the specific phosphorylation of 1,6-anhydro-N-acetylmuramic acid (anhMurNAc) with the simultaneous cleavage of the 1,6-anhydro ring, generating MurNAc-6-P. Is required for the utilization of anhMurNAc either imported from the medium or derived from its own cell wall murein, and thus plays a role in cell wall recycling. This is Anhydro-N-acetylmuramic acid kinase from Bacillus cereus (strain ATCC 10987 / NRS 248).